A 570-amino-acid polypeptide reads, in one-letter code: Sulfite reductase [NADPH] hemoprotein beta-component (570 aa).

Cys-434, Cys-440, Cys-479, and Cys-483 together coordinate [4Fe-4S] cluster. Cys-483 provides a ligand contact to siroheme.

Belongs to the nitrite and sulfite reductase 4Fe-4S domain family. Alpha(8)-beta(8). The alpha component is a flavoprotein, the beta component is a hemoprotein. It depends on siroheme as a cofactor. Requires [4Fe-4S] cluster as cofactor.

The enzyme catalyses hydrogen sulfide + 3 NADP(+) + 3 H2O = sulfite + 3 NADPH + 4 H(+). It functions in the pathway sulfur metabolism; hydrogen sulfide biosynthesis; hydrogen sulfide from sulfite (NADPH route): step 1/1. Component of the sulfite reductase complex that catalyzes the 6-electron reduction of sulfite to sulfide. This is one of several activities required for the biosynthesis of L-cysteine from sulfate. The sequence is that of Sulfite reductase [NADPH] hemoprotein beta-component from Cronobacter sakazakii (strain ATCC BAA-894) (Enterobacter sakazakii).